Reading from the N-terminus, the 173-residue chain is MSLVRQNFHEECERGINRQINMELYASYLYLAMSQHFDRDDVALPGFREFFAKASEEEREHAIKLMRYQCGRGGRIVYQDIAKPQTTEWASGLEAMEMALKIEREVNESLLALRGVANKNNDSQFCEFLEGEFLGEQVSDIKKLAGYVTNLKRCGPGLGEYIFDKETLQGGEK.

One can recognise a Ferritin-like diiron domain in the interval 6 to 155 (QNFHEECERG…GYVTNLKRCG (150 aa)). Fe cation is bound by residues E23, E58, H61, E103, and Q137.

It belongs to the ferritin family. Oligomer of 24 subunits. There are two types of subunits: L (light) chain and H (heavy) chain. The functional molecule is roughly spherical and contains a central cavity into which the insoluble mineral iron core is deposited.

Its subcellular location is the cytoplasm. It carries out the reaction 4 Fe(2+) + O2 + 4 H(+) = 4 Fe(3+) + 2 H2O. Stores iron in a soluble, non-toxic, readily available form. Important for iron homeostasis. Has ferroxidase activity. Iron is taken up in the ferrous form and deposited as ferric hydroxides after oxidation. The sequence is that of Ferritin heavy chain from Echinococcus granulosus (Hydatid tapeworm).